The primary structure comprises 173 residues: Ferritin heavy chain (173 aa).

The Ferritin-like diiron domain maps to 6–155 (QNFHEECERG…GYVTNLKRCG (150 aa)). Glu-23, Glu-58, His-61, Glu-103, and Gln-137 together coordinate Fe cation.

It belongs to the ferritin family. In terms of assembly, oligomer of 24 subunits. There are two types of subunits: L (light) chain and H (heavy) chain. The functional molecule is roughly spherical and contains a central cavity into which the insoluble mineral iron core is deposited.

The protein localises to the cytoplasm. It catalyses the reaction 4 Fe(2+) + O2 + 4 H(+) = 4 Fe(3+) + 2 H2O. Functionally, stores iron in a soluble, non-toxic, readily available form. Important for iron homeostasis. Has ferroxidase activity. Iron is taken up in the ferrous form and deposited as ferric hydroxides after oxidation. The chain is Ferritin heavy chain from Echinococcus granulosus (Hydatid tapeworm).